Here is a 336-residue protein sequence, read N- to C-terminus: tRNA N6-adenosine threonylcarbamoyltransferase (336 aa).

Fe cation is bound by residues His114 and His118. Residues 136-140, Asp169, Gly182, Asp186, and Asn275 each bind substrate; that span reads LVSGG. Residue Asp301 coordinates Fe cation.

Belongs to the KAE1 / TsaD family. It depends on Fe(2+) as a cofactor.

It localises to the cytoplasm. The catalysed reaction is L-threonylcarbamoyladenylate + adenosine(37) in tRNA = N(6)-L-threonylcarbamoyladenosine(37) in tRNA + AMP + H(+). Required for the formation of a threonylcarbamoyl group on adenosine at position 37 (t(6)A37) in tRNAs that read codons beginning with adenine. Is involved in the transfer of the threonylcarbamoyl moiety of threonylcarbamoyl-AMP (TC-AMP) to the N6 group of A37, together with TsaE and TsaB. TsaD likely plays a direct catalytic role in this reaction. The sequence is that of tRNA N6-adenosine threonylcarbamoyltransferase from Streptococcus mutans serotype c (strain ATCC 700610 / UA159).